The sequence spans 129 residues: Acyl carrier protein 2, chloroplastic (129 aa).

The transit peptide at 1–49 (MASAAASAVSFARPVKAICVNSVSFSALRKDNVSFRLQPVPQRFSVCCA) directs the protein to the chloroplast. Residues 52–127 (KETVEKVCDI…DAANLIDSLV (76 aa)) form the Carrier domain. Residue serine 87 is modified to O-(pantetheine 4'-phosphoryl)serine.

It belongs to the acyl carrier protein (ACP) family. 4'-phosphopantetheine is transferred from CoA to a specific serine of apo-ACP by acpS. This modification is essential for activity because fatty acids are bound in thioester linkage to the sulfhydryl of the prosthetic group.

Its subcellular location is the plastid. It localises to the chloroplast. Its pathway is lipid metabolism; fatty acid biosynthesis. Carrier of the growing fatty acid chain in fatty acid biosynthesis. The sequence is that of Acyl carrier protein 2, chloroplastic (ACL1.2) from Hordeum vulgare (Barley).